The primary structure comprises 78 residues: Acyl carrier protein (78 aa).

Residues 1–76 form the Carrier domain; the sequence is MALFEDIQAV…DVVKYIEDNK (76 aa). Serine 36 is modified (O-(pantetheine 4'-phosphoryl)serine).

This sequence belongs to the acyl carrier protein (ACP) family. Post-translationally, 4'-phosphopantetheine is transferred from CoA to a specific serine of apo-ACP by AcpS. This modification is essential for activity because fatty acids are bound in thioester linkage to the sulfhydryl of the prosthetic group.

It localises to the cytoplasm. The protein operates within lipid metabolism; fatty acid biosynthesis. Its function is as follows. Carrier of the growing fatty acid chain in fatty acid biosynthesis. In Helicobacter pylori (strain Shi470), this protein is Acyl carrier protein.